Here is a 261-residue protein sequence, read N- to C-terminus: 1-(5-phosphoribosyl)-5-[(5-phosphoribosylamino)methylideneamino] imidazole-4-carboxamide isomerase (261 aa).

The Proton acceptor role is filled by D8. The Proton donor role is filled by D139.

Belongs to the HisA/HisF family.

The protein localises to the cytoplasm. The catalysed reaction is 1-(5-phospho-beta-D-ribosyl)-5-[(5-phospho-beta-D-ribosylamino)methylideneamino]imidazole-4-carboxamide = 5-[(5-phospho-1-deoxy-D-ribulos-1-ylimino)methylamino]-1-(5-phospho-beta-D-ribosyl)imidazole-4-carboxamide. The protein operates within amino-acid biosynthesis; L-histidine biosynthesis; L-histidine from 5-phospho-alpha-D-ribose 1-diphosphate: step 4/9. This chain is 1-(5-phosphoribosyl)-5-[(5-phosphoribosylamino)methylideneamino] imidazole-4-carboxamide isomerase, found in Janthinobacterium sp. (strain Marseille) (Minibacterium massiliensis).